A 408-amino-acid chain; its full sequence is Imidazolonepropionase (408 aa).

Positions 73 and 75 each coordinate Fe(3+). Zn(2+)-binding residues include histidine 73 and histidine 75. 4-imidazolone-5-propanoate-binding residues include arginine 82, tyrosine 145, and histidine 178. Tyrosine 145 lines the N-formimidoyl-L-glutamate pocket. Fe(3+) is bound at residue histidine 243. Residue histidine 243 participates in Zn(2+) binding. Glutamine 246 serves as a coordination point for 4-imidazolone-5-propanoate. Aspartate 318 provides a ligand contact to Fe(3+). Aspartate 318 contacts Zn(2+). 2 residues coordinate N-formimidoyl-L-glutamate: asparagine 320 and glycine 322. Serine 323 serves as a coordination point for 4-imidazolone-5-propanoate.

This sequence belongs to the metallo-dependent hydrolases superfamily. HutI family. It depends on Zn(2+) as a cofactor. Fe(3+) serves as cofactor.

It is found in the cytoplasm. It carries out the reaction 4-imidazolone-5-propanoate + H2O = N-formimidoyl-L-glutamate. The protein operates within amino-acid degradation; L-histidine degradation into L-glutamate; N-formimidoyl-L-glutamate from L-histidine: step 3/3. In terms of biological role, catalyzes the hydrolytic cleavage of the carbon-nitrogen bond in imidazolone-5-propanoate to yield N-formimidoyl-L-glutamate. It is the third step in the universal histidine degradation pathway. This Shewanella baltica (strain OS185) protein is Imidazolonepropionase.